A 157-amino-acid chain; its full sequence is Histidine-containing phosphotransfer protein 5 (157 aa).

N-acetylmethionine is present on Met-1. The 108-residue stretch at 41–148 (TPDFVAEVVS…NLEKQILQAG (108 aa)) folds into the HPt domain. Position 83 is a phosphohistidine (His-83).

As to quaternary structure, interacts with the B-type response regulators ARR1 and ARR2. Binds to AHK2, AHK3, AHK4 and AHK5. Two-component system major event consists of a His-to-Asp phosphorelay between a sensor histidine kinase (HK) and a response regulator (RR). In plants, the His-to-Asp phosphorelay involves an additional intermediate named Histidine-containing phosphotransfer protein (HPt). This multistep phosphorelay consists of a His-Asp-His-Asp sequential transfer of a phosphate group between first a His and an Asp of the HK protein, followed by the transfer to a conserved His of the HPt protein and finally the transfer to an Asp in the receiver domain of the RR protein. As to expression, expressed in the whole plant.

It localises to the cytoplasm. The protein localises to the cytosol. The protein resides in the nucleus. Functionally, functions as a two-component phosphorelay mediator between cytokinin sensor histidine kinases and response regulators (B-type ARRs). Plays an important role in propagating cytokinin signal transduction through the multistep His-to-Asp phosphorelay. The sequence is that of Histidine-containing phosphotransfer protein 5 (AHP5) from Arabidopsis thaliana (Mouse-ear cress).